Here is a 443-residue protein sequence, read N- to C-terminus: Protein translocase subunit SecY (443 aa).

10 consecutive transmembrane segments (helical) span residues 24 to 44 (LFVI…IPGI), 77 to 97 (IFAL…LLTV), 125 to 145 (LVLA…MPGM), 154 to 174 (FAFY…LMWL), 183 to 203 (IGNG…PPAI), 217 to 237 (FLVL…VVFV), 274 to 294 (VIPA…ASWF), 317 to 337 (YVLL…ALVF), 370 to 390 (MTRL…IPEF), and 397 to 417 (VPFY…MDFM).

Belongs to the SecY/SEC61-alpha family. As to quaternary structure, component of the Sec protein translocase complex. Heterotrimer consisting of SecY, SecE and SecG subunits. The heterotrimers can form oligomers, although 1 heterotrimer is thought to be able to translocate proteins. Interacts with the ribosome. Interacts with SecDF, and other proteins may be involved. Interacts with SecA.

The protein resides in the cell inner membrane. Functionally, the central subunit of the protein translocation channel SecYEG. Consists of two halves formed by TMs 1-5 and 6-10. These two domains form a lateral gate at the front which open onto the bilayer between TMs 2 and 7, and are clamped together by SecE at the back. The channel is closed by both a pore ring composed of hydrophobic SecY resides and a short helix (helix 2A) on the extracellular side of the membrane which forms a plug. The plug probably moves laterally to allow the channel to open. The ring and the pore may move independently. This chain is Protein translocase subunit SecY, found in Escherichia coli O157:H7.